The following is a 71-amino-acid chain: DNA-directed RNA polymerase subunit epsilon (71 aa).

The protein belongs to the RNA polymerase subunit epsilon family. RNAP is composed of a core of 2 alpha, a beta and a beta' subunit. The core is associated with a delta subunit, and at least one of epsilon or omega. When a sigma factor is associated with the core the holoenzyme is formed, which can initiate transcription.

It catalyses the reaction RNA(n) + a ribonucleoside 5'-triphosphate = RNA(n+1) + diphosphate. Its function is as follows. A non-essential component of RNA polymerase (RNAP). This chain is DNA-directed RNA polymerase subunit epsilon, found in Anoxybacillus flavithermus (strain DSM 21510 / WK1).